Here is a 183-residue protein sequence, read N- to C-terminus: Regulatory protein RecX (183 aa).

The segment covering 1–12 (MTSFPHPSTSES) has biased composition (polar residues). The tract at residues 1–26 (MTSFPHPSTSESGPDPDSEPNREEQA) is disordered.

The protein belongs to the RecX family.

The protein resides in the cytoplasm. Functionally, modulates RecA activity. This Mycobacterium sp. (strain JLS) protein is Regulatory protein RecX.